We begin with the raw amino-acid sequence, 592 residues long: UvrABC system protein C (592 aa).

Residues 14–91 (KKPGCYLWKN…IKKHKPRYNI (78 aa)) form the GIY-YIG domain. Positions 197–232 (DQVLKDLKEKESIASEKFDFEQAKKYLDLQKAINLI) constitute a UVR domain.

Belongs to the UvrC family. In terms of assembly, interacts with UvrB in an incision complex.

It is found in the cytoplasm. In terms of biological role, the UvrABC repair system catalyzes the recognition and processing of DNA lesions. UvrC both incises the 5' and 3' sides of the lesion. The N-terminal half is responsible for the 3' incision and the C-terminal half is responsible for the 5' incision. This is UvrABC system protein C from Mycoplasmoides gallisepticum (strain R(low / passage 15 / clone 2)) (Mycoplasma gallisepticum).